Here is a 390-residue protein sequence, read N- to C-terminus: Magnesium-protoporphyrin IX monomethyl ester [oxidative] cyclase (390 aa).

Belongs to the AcsF family. The cofactor is Fe cation.

It catalyses the reaction Mg-protoporphyrin IX 13-monomethyl ester + 3 NADPH + 3 O2 + 2 H(+) = 3,8-divinyl protochlorophyllide a + 3 NADP(+) + 5 H2O. Its pathway is porphyrin-containing compound metabolism; chlorophyll biosynthesis (light-independent). Its function is as follows. Catalyzes the formation of the isocyclic ring in chlorophyll biosynthesis. Mediates the cyclase reaction, which results in the formation of divinylprotochlorophyllide (Pchlide) characteristic of all chlorophylls from magnesium-protoporphyrin IX 13-monomethyl ester (MgPMME). The chain is Magnesium-protoporphyrin IX monomethyl ester [oxidative] cyclase from Prochlorococcus marinus (strain MIT 9312).